Here is a 456-residue protein sequence, read N- to C-terminus: 3-isopropylmalate dehydratase large subunit (456 aa).

[4Fe-4S] cluster is bound by residues cysteine 336, cysteine 396, and cysteine 399.

It belongs to the aconitase/IPM isomerase family. LeuC type 1 subfamily. As to quaternary structure, heterodimer of LeuC and LeuD. Requires [4Fe-4S] cluster as cofactor.

It catalyses the reaction (2R,3S)-3-isopropylmalate = (2S)-2-isopropylmalate. It functions in the pathway amino-acid biosynthesis; L-leucine biosynthesis; L-leucine from 3-methyl-2-oxobutanoate: step 2/4. Functionally, catalyzes the isomerization between 2-isopropylmalate and 3-isopropylmalate, via the formation of 2-isopropylmaleate. This chain is 3-isopropylmalate dehydratase large subunit, found in Staphylococcus saprophyticus subsp. saprophyticus (strain ATCC 15305 / DSM 20229 / NCIMB 8711 / NCTC 7292 / S-41).